The primary structure comprises 376 residues: Queuine tRNA-ribosyltransferase (376 aa).

Asp89 (proton acceptor) is an active-site residue. Residues 89-93 (DSGGF), Asp143, Gln194, and Gly221 each bind substrate. Positions 252–258 (GVGIPSN) are RNA binding. Asp271 serves as the catalytic Nucleophile. The segment at 276–280 (ARNGR) is RNA binding; important for wobble base 34 recognition. The Zn(2+) site is built by Cys309, Cys311, Cys314, and His340.

It belongs to the queuine tRNA-ribosyltransferase family. In terms of assembly, homodimer. Within each dimer, one monomer is responsible for RNA recognition and catalysis, while the other monomer binds to the replacement base PreQ1. Zn(2+) is required as a cofactor.

The catalysed reaction is 7-aminomethyl-7-carbaguanine + guanosine(34) in tRNA = 7-aminomethyl-7-carbaguanosine(34) in tRNA + guanine. Its pathway is tRNA modification; tRNA-queuosine biosynthesis. Catalyzes the base-exchange of a guanine (G) residue with the queuine precursor 7-aminomethyl-7-deazaguanine (PreQ1) at position 34 (anticodon wobble position) in tRNAs with GU(N) anticodons (tRNA-Asp, -Asn, -His and -Tyr). Catalysis occurs through a double-displacement mechanism. The nucleophile active site attacks the C1' of nucleotide 34 to detach the guanine base from the RNA, forming a covalent enzyme-RNA intermediate. The proton acceptor active site deprotonates the incoming PreQ1, allowing a nucleophilic attack on the C1' of the ribose to form the product. After dissociation, two additional enzymatic reactions on the tRNA convert PreQ1 to queuine (Q), resulting in the hypermodified nucleoside queuosine (7-(((4,5-cis-dihydroxy-2-cyclopenten-1-yl)amino)methyl)-7-deazaguanosine). In Clostridium botulinum (strain Kyoto / Type A2), this protein is Queuine tRNA-ribosyltransferase.